We begin with the raw amino-acid sequence, 254 residues long: Ribosomal RNA small subunit methyltransferase J (254 aa).

Residues 106–107 and Asp-177 each bind S-adenosyl-L-methionine; that span reads RD.

Belongs to the methyltransferase superfamily. RsmJ family.

The protein localises to the cytoplasm. It catalyses the reaction guanosine(1516) in 16S rRNA + S-adenosyl-L-methionine = N(2)-methylguanosine(1516) in 16S rRNA + S-adenosyl-L-homocysteine + H(+). Its function is as follows. Specifically methylates the guanosine in position 1516 of 16S rRNA. This chain is Ribosomal RNA small subunit methyltransferase J, found in Nitrosococcus oceani (strain ATCC 19707 / BCRC 17464 / JCM 30415 / NCIMB 11848 / C-107).